A 175-amino-acid chain; its full sequence is Cyclic pyranopterin monophosphate synthase (175 aa).

Residues 78–80 (LCH) and 125–126 (ME) contribute to the substrate site. Residue aspartate 140 is part of the active site.

The protein belongs to the MoaC family. In terms of assembly, homohexamer; trimer of dimers.

The enzyme catalyses (8S)-3',8-cyclo-7,8-dihydroguanosine 5'-triphosphate = cyclic pyranopterin phosphate + diphosphate. It participates in cofactor biosynthesis; molybdopterin biosynthesis. Functionally, catalyzes the conversion of (8S)-3',8-cyclo-7,8-dihydroguanosine 5'-triphosphate to cyclic pyranopterin monophosphate (cPMP). The sequence is that of Cyclic pyranopterin monophosphate synthase from Rhodopirellula baltica (strain DSM 10527 / NCIMB 13988 / SH1).